Consider the following 101-residue polypeptide: Small ribosomal subunit protein uS14 (101 aa).

This sequence belongs to the universal ribosomal protein uS14 family. As to quaternary structure, part of the 30S ribosomal subunit. Contacts proteins S3 and S10.

Its function is as follows. Binds 16S rRNA, required for the assembly of 30S particles and may also be responsible for determining the conformation of the 16S rRNA at the A site. The sequence is that of Small ribosomal subunit protein uS14 from Colwellia psychrerythraea (strain 34H / ATCC BAA-681) (Vibrio psychroerythus).